The chain runs to 428 residues: Light-independent protochlorophyllide reductase subunit N (428 aa).

Residues C31, C56, and C117 each contribute to the [4Fe-4S] cluster site.

It belongs to the BchN/ChlN family. In terms of assembly, protochlorophyllide reductase is composed of three subunits; BchL, BchN and BchB. Forms a heterotetramer of two BchB and two BchN subunits. [4Fe-4S] cluster is required as a cofactor.

The catalysed reaction is chlorophyllide a + oxidized 2[4Fe-4S]-[ferredoxin] + 2 ADP + 2 phosphate = protochlorophyllide a + reduced 2[4Fe-4S]-[ferredoxin] + 2 ATP + 2 H2O. It participates in porphyrin-containing compound metabolism; bacteriochlorophyll biosynthesis (light-independent). Its function is as follows. Component of the dark-operative protochlorophyllide reductase (DPOR) that uses Mg-ATP and reduced ferredoxin to reduce ring D of protochlorophyllide (Pchlide) to form chlorophyllide a (Chlide). This reaction is light-independent. The NB-protein (BchN-BchB) is the catalytic component of the complex. The chain is Light-independent protochlorophyllide reductase subunit N from Rhodopseudomonas palustris (strain BisB5).